Reading from the N-terminus, the 81-residue chain is Small ribosomal subunit protein bS16 (81 aa).

The protein belongs to the bacterial ribosomal protein bS16 family.

The sequence is that of Small ribosomal subunit protein bS16 from Coprothermobacter proteolyticus (strain ATCC 35245 / DSM 5265 / OCM 4 / BT).